We begin with the raw amino-acid sequence, 154 residues long: MAIETAENRTPKVIEVTEIMNMLPHRYPFLLVDRVTDYEEGKWLRAIKNVTVNEPCFTGHFPSSPVFPGVLILEAMAQATGVLAVATYGKMREDELYYFAAIDNARFKRPVVPGDQLVLEVEFLKEIRGITKFTGKAYVNGKLACEADLMCARK.

His60 is an active-site residue.

Belongs to the thioester dehydratase family. FabZ subfamily.

It is found in the cytoplasm. It catalyses the reaction a (3R)-hydroxyacyl-[ACP] = a (2E)-enoyl-[ACP] + H2O. Involved in unsaturated fatty acids biosynthesis. Catalyzes the dehydration of short chain beta-hydroxyacyl-ACPs and long chain saturated and unsaturated beta-hydroxyacyl-ACPs. This Haemophilus ducreyi (strain 35000HP / ATCC 700724) protein is 3-hydroxyacyl-[acyl-carrier-protein] dehydratase FabZ.